A 149-amino-acid chain; its full sequence is UPF0260 protein Pfl01_1392 (149 aa).

The protein belongs to the UPF0260 family.

The polypeptide is UPF0260 protein Pfl01_1392 (Pseudomonas fluorescens (strain Pf0-1)).